We begin with the raw amino-acid sequence, 392 residues long: 23S rRNA (uracil(747)-C(5))-methyltransferase RlmC (392 aa).

4 residues coordinate [4Fe-4S] cluster: Cys4, Cys12, Cys15, and Cys93. Positions 218, 247, 275, and 321 each coordinate S-adenosyl-L-methionine. The Nucleophile role is filled by Cys348.

This sequence belongs to the class I-like SAM-binding methyltransferase superfamily. RNA M5U methyltransferase family. RlmC subfamily.

The enzyme catalyses uridine(747) in 23S rRNA + S-adenosyl-L-methionine = 5-methyluridine(747) in 23S rRNA + S-adenosyl-L-homocysteine + H(+). Functionally, catalyzes the formation of 5-methyl-uridine at position 747 (m5U747) in 23S rRNA. This Haemophilus influenzae (strain PittEE) protein is 23S rRNA (uracil(747)-C(5))-methyltransferase RlmC.